Reading from the N-terminus, the 500-residue chain is Probable cytosol aminopeptidase (500 aa).

Residues Lys268 and Asp273 each contribute to the Mn(2+) site. Lys280 is a catalytic residue. 3 residues coordinate Mn(2+): Asp291, Asp350, and Glu352. Arg354 is an active-site residue.

Belongs to the peptidase M17 family. Requires Mn(2+) as cofactor.

Its subcellular location is the cytoplasm. The enzyme catalyses Release of an N-terminal amino acid, Xaa-|-Yaa-, in which Xaa is preferably Leu, but may be other amino acids including Pro although not Arg or Lys, and Yaa may be Pro. Amino acid amides and methyl esters are also readily hydrolyzed, but rates on arylamides are exceedingly low.. It catalyses the reaction Release of an N-terminal amino acid, preferentially leucine, but not glutamic or aspartic acids.. In terms of biological role, presumably involved in the processing and regular turnover of intracellular proteins. Catalyzes the removal of unsubstituted N-terminal amino acids from various peptides. In Azoarcus sp. (strain BH72), this protein is Probable cytosol aminopeptidase.